The chain runs to 247 residues: Probable transcriptional regulatory protein YPO2055/y2255/YP_1898 (247 aa).

The protein belongs to the TACO1 family.

Its subcellular location is the cytoplasm. The chain is Probable transcriptional regulatory protein YPO2055/y2255/YP_1898 from Yersinia pestis.